Reading from the N-terminus, the 119-residue chain is NADH-quinone oxidoreductase subunit A (119 aa).

A run of 3 helical transmembrane segments spans residues 9–29 (VLLF…LGYV), 63–83 (LVAI…PWAV), and 88–108 (VGMA…VGFA).

The protein belongs to the complex I subunit 3 family. As to quaternary structure, NDH-1 is composed of 14 different subunits. Subunits NuoA, H, J, K, L, M, N constitute the membrane sector of the complex.

The protein resides in the cell inner membrane. The catalysed reaction is a quinone + NADH + 5 H(+)(in) = a quinol + NAD(+) + 4 H(+)(out). Its function is as follows. NDH-1 shuttles electrons from NADH, via FMN and iron-sulfur (Fe-S) centers, to quinones in the respiratory chain. The immediate electron acceptor for the enzyme in this species is believed to be ubiquinone. Couples the redox reaction to proton translocation (for every two electrons transferred, four hydrogen ions are translocated across the cytoplasmic membrane), and thus conserves the redox energy in a proton gradient. The protein is NADH-quinone oxidoreductase subunit A of Verminephrobacter eiseniae (strain EF01-2).